The sequence spans 160 residues: MTKPLTKGEIVLFALRKAGIASEATNIDVEPQSFEEGINDLEDLMAELQITFGDLGYQFSAEEENPTSDDASGLPRKYKQVMGYQLMLRMLSDYGIEPTPRQEASAAAAYDALLTDTLSVPSIARRGDMPVGQGNNYTALGTASYYVERGFHAKNTDPVS.

The protein to phage P22 gp4.

The protein resides in the virion. Its function is as follows. Component of the cylindrical core that assembles on the inner surface of the capsid during procapsid formation. Required for stabilization of the condensed DNA within the capsid; perhaps by plugging the hole through which the DNA enters. Plays a role in ejection of the bacteriophage DNA into the host cell at the initiation of infection. Functions as an exolysin that catalyzes the cleavage of the glycosidic bonds between N-acetylmuramic acid and N-acetylglucosamine residues in peptidoglycans. The protein is Peptidoglycan hydrolase gp27 (27) of Acyrthosiphon pisum secondary endosymbiont phage 1 (Bacteriophage APSE-1).